Here is a 292-residue protein sequence, read N- to C-terminus: tRNA pseudouridine synthase B (292 aa).

Asp-38 (nucleophile) is an active-site residue.

This sequence belongs to the pseudouridine synthase TruB family. Type 1 subfamily.

It carries out the reaction uridine(55) in tRNA = pseudouridine(55) in tRNA. In terms of biological role, responsible for synthesis of pseudouridine from uracil-55 in the psi GC loop of transfer RNAs. The sequence is that of tRNA pseudouridine synthase B from Streptococcus pneumoniae serotype 2 (strain D39 / NCTC 7466).